The chain runs to 403 residues: Aminomethyltransferase, mitochondrial (403 aa).

The N-terminal 28 residues, 1-28, are a transit peptide targeting the mitochondrion; sequence MHRIVSVVAPLGFRLQAQPLVQSRPLSS. The substrate site is built by E232 and R261. K368 is subject to N6-succinyllysine. Residue Y399 coordinates substrate.

Belongs to the GcvT family. The glycine cleavage system is composed of four proteins: P, T, L and H.

It is found in the mitochondrion. It catalyses the reaction N(6)-[(R)-S(8)-aminomethyldihydrolipoyl]-L-lysyl-[protein] + (6S)-5,6,7,8-tetrahydrofolate = N(6)-[(R)-dihydrolipoyl]-L-lysyl-[protein] + (6R)-5,10-methylene-5,6,7,8-tetrahydrofolate + NH4(+). The glycine cleavage system catalyzes the degradation of glycine. In Mus musculus (Mouse), this protein is Aminomethyltransferase, mitochondrial.